Consider the following 259-residue polypeptide: 3'-5' ssDNA/RNA exonuclease TatD (259 aa).

A divalent metal cation-binding residues include Glu-92, His-128, and His-153.

This sequence belongs to the metallo-dependent hydrolases superfamily. TatD-type hydrolase family. TatD subfamily. Monomer. Mg(2+) serves as cofactor.

It is found in the cytoplasm. In terms of biological role, 3'-5' exonuclease that prefers single-stranded DNA and RNA. May play a role in the H(2)O(2)-induced DNA damage repair. The chain is 3'-5' ssDNA/RNA exonuclease TatD from Erwinia amylovora (strain ATCC 49946 / CCPPB 0273 / Ea273 / 27-3).